The chain runs to 405 residues: Tryptophan synthase beta chain (405 aa).

Lys-98 carries the post-translational modification N6-(pyridoxal phosphate)lysine.

This sequence belongs to the TrpB family. Tetramer of two alpha and two beta chains. Pyridoxal 5'-phosphate serves as cofactor.

The enzyme catalyses (1S,2R)-1-C-(indol-3-yl)glycerol 3-phosphate + L-serine = D-glyceraldehyde 3-phosphate + L-tryptophan + H2O. Its pathway is amino-acid biosynthesis; L-tryptophan biosynthesis; L-tryptophan from chorismate: step 5/5. In terms of biological role, the beta subunit is responsible for the synthesis of L-tryptophan from indole and L-serine. This Xanthomonas oryzae pv. oryzae (strain PXO99A) protein is Tryptophan synthase beta chain.